Reading from the N-terminus, the 302-residue chain is Probable alpha-L-glutamate ligase (302 aa).

Residues 104–287 enclose the ATP-grasp domain; the sequence is MQLLSREGVG…VAGMIIEFIE (184 aa). ATP-binding positions include lysine 141, 178 to 179, aspartate 187, and 211 to 213; these read EF and RSN. Mg(2+) is bound by residues aspartate 248, glutamate 260, and asparagine 262. Mn(2+) is bound by residues aspartate 248, glutamate 260, and asparagine 262.

The protein belongs to the RimK family. The cofactor is Mg(2+). Requires Mn(2+) as cofactor.

The protein is Probable alpha-L-glutamate ligase of Halorhodospira halophila (strain DSM 244 / SL1) (Ectothiorhodospira halophila (strain DSM 244 / SL1)).